Consider the following 346-residue polypeptide: 3-isopropylmalate dehydrogenase (346 aa).

76–87 (GPKWTDPNNRPE) provides a ligand contact to NAD(+). Positions 94, 104, 132, and 217 each coordinate substrate. Mg(2+)-binding residues include Asp217, Asp241, and Asp245. 275-287 (GSAPDIANQDIAN) provides a ligand contact to NAD(+).

It belongs to the isocitrate and isopropylmalate dehydrogenases family. LeuB type 1 subfamily. Homodimer. Requires Mg(2+) as cofactor. Mn(2+) is required as a cofactor.

It is found in the cytoplasm. It catalyses the reaction (2R,3S)-3-isopropylmalate + NAD(+) = 4-methyl-2-oxopentanoate + CO2 + NADH. The protein operates within amino-acid biosynthesis; L-leucine biosynthesis; L-leucine from 3-methyl-2-oxobutanoate: step 3/4. Functionally, catalyzes the oxidation of 3-carboxy-2-hydroxy-4-methylpentanoate (3-isopropylmalate) to 3-carboxy-4-methyl-2-oxopentanoate. The product decarboxylates to 4-methyl-2 oxopentanoate. The polypeptide is 3-isopropylmalate dehydrogenase (Staphylococcus saprophyticus subsp. saprophyticus (strain ATCC 15305 / DSM 20229 / NCIMB 8711 / NCTC 7292 / S-41)).